Reading from the N-terminus, the 364-residue chain is Methylthioribose-1-phosphate isomerase (364 aa).

Residues 53–55 (RGA), Arg-90, and Gln-203 each bind substrate. The active-site Proton donor is the Asp-244. 254–255 (NK) is a binding site for substrate.

This sequence belongs to the eIF-2B alpha/beta/delta subunits family. MtnA subfamily.

The catalysed reaction is 5-(methylsulfanyl)-alpha-D-ribose 1-phosphate = 5-(methylsulfanyl)-D-ribulose 1-phosphate. Its pathway is amino-acid biosynthesis; L-methionine biosynthesis via salvage pathway; L-methionine from S-methyl-5-thio-alpha-D-ribose 1-phosphate: step 1/6. In terms of biological role, catalyzes the interconversion of methylthioribose-1-phosphate (MTR-1-P) into methylthioribulose-1-phosphate (MTRu-1-P). This Brucella anthropi (strain ATCC 49188 / DSM 6882 / CCUG 24695 / JCM 21032 / LMG 3331 / NBRC 15819 / NCTC 12168 / Alc 37) (Ochrobactrum anthropi) protein is Methylthioribose-1-phosphate isomerase.